The primary structure comprises 213 residues: Lysozyme g-like protein 2 (213 aa).

A signal peptide spans 1 to 19; it reads MVPSVVFWGLIALVGTAKG. 2 cysteine pairs are disulfide-bonded: C40-C93 and C54-C62. E106 is a catalytic residue.

It belongs to the glycosyl hydrolase 23 family.

The protein localises to the secreted. Its function is as follows. May act as a potent antibacterial protein that may play a role in the innate immunity. In Mus musculus (Mouse), this protein is Lysozyme g-like protein 2 (Lyg2).